Consider the following 105-residue polypeptide: uncharacterized protein (105 aa).

This is an uncharacterized protein from Rickettsia prowazekii (strain Madrid E).